Reading from the N-terminus, the 232-residue chain is Recombination protein RecR (232 aa).

A C4-type zinc finger spans residues cysteine 92–cysteine 107. The Toprim domain occupies serine 115–proline 209.

The protein belongs to the RecR family.

Functionally, may play a role in DNA repair. It seems to be involved in an RecBC-independent recombinational process of DNA repair. It may act with RecF and RecO. This chain is Recombination protein RecR, found in Synechocystis sp. (strain ATCC 27184 / PCC 6803 / Kazusa).